A 1571-amino-acid polypeptide reads, in one-letter code: Phospholipid-transporting ATPase DNF1 (1571 aa).

Residues 1–94 form a disordered region; that stretch reads MSGTFHGDGH…TPKLNNGSGT (94 aa). The Cytoplasmic portion of the chain corresponds to 1–214; sequence MSGTFHGDGH…TFLPKNILFQ (214 aa). Basic and acidic residues predominate over residues 29–40; the sequence is EDTHIAPTHFDD. Residues 42–56 show a composition bias toward polar residues; that stretch reads ATSNKYSRPQVSFND. Ser53 bears the Phosphoserine mark. The span at 66–76 shows a compositional bias: acidic residues; that stretch reads AEEFTFNDDTE. At Thr70 the chain carries Phosphothreonine. Residues 80 to 93 are compositionally biased toward polar residues; the sequence is HSFQPTPKLNNGSG. Ser81 bears the Phosphoserine mark. Residue Thr85 is modified to Phosphothreonine. A Phosphoserine modification is found at Ser92. Residue Thr94 is modified to Phosphothreonine. Position 104 is a phosphoserine (Ser104). Residue Thr109 is modified to Phosphothreonine. Residues 215-235 form a helical membrane-spanning segment; that stretch reads FHNFANVYFLVLIILGAFQIF. Positions 234–241 are involved in phosphatidylcholine substrate selection; sequence IFGVTNPG. Over 236–239 the chain is Extracellular; sequence GVTN. Residues 240–260 form a helical membrane-spanning segment; the sequence is PGLSAVPLVVIVIITAIKDAI. The Cytoplasmic portion of the chain corresponds to 261-553; sequence EDSRRTVLDL…RISRELNFSV (293 aa). A phosphoserine mark is found at Ser351, Ser354, Ser358, and Ser365. Position 368 is a phosphotyrosine (Tyr368). A helical membrane pass occupies residues 554–574; it reads VINFVLLFILCFVSGIANGVY. At 575-594 the chain is on the extracellular side; that stretch reads YDKKGRSRFSYEFGTIAGSA. Positions 586–590 are involved in phosphatidylcholine substrate selection; that stretch reads EFGTI. The helical transmembrane segment at 595-615 threads the bilayer; that stretch reads ATNGFVSFWVAVILYQSLVPI. At 616-1188 the chain is on the cytoplasmic side; sequence SLYISVEIIK…WSYKRLAEMI (573 aa). The active-site 4-aspartylphosphate intermediate is the Asp667. ATP is bound by residues Asp667, Lys668, Thr669, Glu801, Phe842, Ser844, Lys847, and Lys871. Asp667 is a Mg(2+) binding site. Residue Thr669 participates in Mg(2+) binding. Lys895 is covalently cross-linked (Glycyl lysine isopeptide (Lys-Gly) (interchain with G-Cter in ubiquitin)). ATP is bound by residues Arg909, Thr910, Thr989, Gly990, Asp991, Arg1104, and Lys1110. Asp1130 serves as a coordination point for Mg(2+). The ATP site is built by Asn1133 and Asp1134. Asp1134 serves as a coordination point for Mg(2+). Residues 1189-1209 traverse the membrane as a helical segment; it reads PEFFYKNMIFALALFWYGIYN. Over 1210 to 1219 the chain is Extracellular; the sequence is DFDGSYLYEY. A helical membrane pass occupies residues 1220–1240; sequence TYMMFYNLAFTSLPVIFLGIL. The Cytoplasmic portion of the chain corresponds to 1241 to 1270; sequence DQDVNDTISLVVPQLYRVGILRKEWNQRKF. Residues 1271-1291 form a helical membrane-spanning segment; that stretch reads LWYMLDGLYQSIICFFFPYLV. Residues 1292 to 1307 lie on the Extracellular side of the membrane; the sequence is YHKNMIVTSNGLGLDH. Residues 1308 to 1328 traverse the membrane as a helical segment; the sequence is RYFVGVYVTTIAVISCNTYVL. The Cytoplasmic segment spans residues 1329–1334; the sequence is LHQYRW. The chain crosses the membrane as a helical span at residues 1335–1355; the sequence is DWFSGLFIALSCLVVFAWTGI. Over 1356–1375 the chain is Extracellular; it reads WSSAIASREFFKAAARIYGA. Residues 1376–1396 traverse the membrane as a helical segment; that stretch reads PSFWAVFFVAVLFCLLPRFTY. Arg1393 provides a ligand contact to a 1,2-diacyl-sn-glycero-3-phospho-L-serine. The Cytoplasmic segment spans residues 1397-1571; sequence DSFQKFFYPT…ASLIGTQQNN (175 aa). Ser1506 carries the phosphoserine modification. Thr1551 is subject to Phosphothreonine. Phosphoserine is present on residues Ser1552 and Ser1563.

Belongs to the cation transport ATPase (P-type) (TC 3.A.3) family. Type IV subfamily. In terms of assembly, component of a flippase complex consisting of DNF1 and LEM3. Interacts with LEM3; the interaction is direct and required for their mutual export from the endoplasmic reticulum. Mg(2+) is required as a cofactor. In terms of processing, phosphorylated by FPK1 and KIN82.

It localises to the cell membrane. Its subcellular location is the endosome membrane. The protein localises to the golgi apparatus. It is found in the trans-Golgi network membrane. The protein resides in the cell septum. It localises to the bud. It carries out the reaction ATP + H2O + phospholipidSide 1 = ADP + phosphate + phospholipidSide 2.. The catalysed reaction is a 1,2-diacyl-sn-glycero-3-phosphoethanolamine(out) + ATP + H2O = a 1,2-diacyl-sn-glycero-3-phosphoethanolamine(in) + ADP + phosphate + H(+). It catalyses the reaction a 1,2-diacyl-sn-glycero-3-phosphocholine(out) + ATP + H2O = a 1,2-diacyl-sn-glycero-3-phosphocholine(in) + ADP + phosphate + H(+). The enzyme catalyses a beta-D-glucosyl-(1&lt;-&gt;1')-N-acylsphing-4-enine(out) + ATP + H2O = a beta-D-glucosyl-(1&lt;-&gt;1')-N-acylsphing-4-enine(in) + ADP + phosphate + H(+). It carries out the reaction a 1,2-diacyl-sn-glycero-3-phospho-L-serine(out) + ATP + H2O = a 1,2-diacyl-sn-glycero-3-phospho-L-serine(in) + ADP + phosphate + H(+). In terms of biological role, catalytic component of a P4-ATPase flippase complex which catalyzes the hydrolysis of ATP coupled to the transport of glucosylceramide, phosphatidylcholine, phosphatidylethanolamine, and small amounts of phosphatidylserine from the lumenal to the cytosolic leaflet of the cell membrane and ensures the maintenance of asymmetric distribution of phospholipids. Does not appear to transport sphingomyelin, inositol phosphoceramide, or phosphatidic acid. Required for efficient endocytosis. The protein is Phospholipid-transporting ATPase DNF1 of Saccharomyces cerevisiae (strain ATCC 204508 / S288c) (Baker's yeast).